Reading from the N-terminus, the 333-residue chain is Mitochondrial glycine transporter (333 aa).

3 Solcar repeats span residues 10 to 93 (SKST…IRQS), 125 to 209 (LSNT…GKKR), and 235 to 319 (HAAS…LIRR). Helical transmembrane passes span 16–41 (FAAGLGSGVLSAVLLQPIDLLKTRVQ) and 68–94 (GAVPSALRTGFGSAIYFTSLNAIRQSA). Positions 98–126 (SPLPSSSSSTTTSSSTTTSSSSSSLPKLS) are disordered. The next 4 helical transmembrane spans lie at 131–156 (LLAGAAARSLAGLILMPLTVLKVRYE), 184–207 (GYGATAVRDAPYAGLYVLFYEQGK), 239–265 (INFASGVLAGVICSVVSNPFDAVKTRI), and 294–312 (GLALRMSRKAVSSALAWTV).

The protein belongs to the mitochondrial carrier (TC 2.A.29) family. SLC25A38 subfamily.

Its subcellular location is the mitochondrion inner membrane. It catalyses the reaction glycine(in) = glycine(out). Its function is as follows. Mitochondrial glycine transporter that imports glycine into the mitochondrial matrix. Plays an important role in providing glycine for the first enzymatic step in heme biosynthesis, the condensation of glycine with succinyl-CoA to produce 5-aminolevulinate (ALA) in the mitochondrial matrix. The polypeptide is Mitochondrial glycine transporter (Chaetomium globosum (strain ATCC 6205 / CBS 148.51 / DSM 1962 / NBRC 6347 / NRRL 1970) (Soil fungus)).